We begin with the raw amino-acid sequence, 274 residues long: Formamidopyrimidine-DNA glycosylase (274 aa).

P2 acts as the Schiff-base intermediate with DNA in catalysis. The Proton donor role is filled by E3. Catalysis depends on K58, which acts as the Proton donor; for beta-elimination activity. Residues H92 and R111 each coordinate DNA. The segment at 239–273 (HVYGREGEPCERCGTIIEKIKVAQRGTHFCPLEQR) adopts an FPG-type; degenerate zinc-finger fold. R263 serves as the catalytic Proton donor; for delta-elimination activity.

This sequence belongs to the FPG family. In terms of assembly, monomer. It depends on Zn(2+) as a cofactor.

It carries out the reaction Hydrolysis of DNA containing ring-opened 7-methylguanine residues, releasing 2,6-diamino-4-hydroxy-5-(N-methyl)formamidopyrimidine.. The catalysed reaction is 2'-deoxyribonucleotide-(2'-deoxyribose 5'-phosphate)-2'-deoxyribonucleotide-DNA = a 3'-end 2'-deoxyribonucleotide-(2,3-dehydro-2,3-deoxyribose 5'-phosphate)-DNA + a 5'-end 5'-phospho-2'-deoxyribonucleoside-DNA + H(+). Functionally, involved in base excision repair of DNA damaged by oxidation or by mutagenic agents. Acts as a DNA glycosylase that recognizes and removes damaged bases. Has a preference for oxidized purines, such as 7,8-dihydro-8-oxoguanine (8-oxoG). Has AP (apurinic/apyrimidinic) lyase activity and introduces nicks in the DNA strand. Cleaves the DNA backbone by beta-delta elimination to generate a single-strand break at the site of the removed base with both 3'- and 5'-phosphates. This chain is Formamidopyrimidine-DNA glycosylase, found in Lactiplantibacillus plantarum (strain ATCC BAA-793 / NCIMB 8826 / WCFS1) (Lactobacillus plantarum).